The following is a 261-amino-acid chain: Syntaxin-7 (261 aa).

The residue at position 2 (Ser-2) is an N-acetylserine. At 2–238 the chain is on the cytoplasmic side; that stretch reads SYTPGIGGDS…DYQRKSRKTL (237 aa). Thr-4 is modified (phosphothreonine). Ser-45 carries the post-translational modification Phosphoserine. The stretch at 47-68 forms a coiled coil; the sequence is ELRQLLQQKQQYTNQLAKETDK. Ser-75 carries the post-translational modification Phosphoserine. Position 79 is a phosphothreonine (Thr-79). Phosphoserine occurs at positions 125, 126, 129, and 205. Positions 128-148 are disordered; sequence VSGGFPEDSSKEKNLVSWESQ. One can recognise a t-SNARE coiled-coil homology domain in the interval 165–227; that stretch reads LRLIHERESS…QQANQQLSRA (63 aa). Residues 239-259 form a helical; Anchor for type IV membrane protein membrane-spanning segment; the sequence is CIIIFILVVRIVIICLIVWGL. Topologically, residues 260–261 are vesicular; it reads KG.

This sequence belongs to the syntaxin family. As to quaternary structure, interacts with VPS11, VPS16 and VPS18. Interacts with VPS33A. Forms a SNARE complex with VTI1B, STX8 and VAMP8 which functions in the homotypic fusion of late endosomes. Component of the SNARE complex composed of STX7, STX8, VAMP7 and VTI1B that is required for heterotypic fusion of late endosomes with lysosomes. Interacts with TPC1.

The protein localises to the early endosome membrane. In terms of biological role, may be involved in protein trafficking from the plasma membrane to the early endosome (EE) as well as in homotypic fusion of endocytic organelles. Mediates the endocytic trafficking from early endosomes to late endosomes and lysosomes. The protein is Syntaxin-7 (Stx7) of Mus musculus (Mouse).